Reading from the N-terminus, the 356-residue chain is Cyclin-D2-2 (356 aa).

The span at 325–343 shows a compositional bias: polar residues; the sequence is LGSSQSNSNNKDYNSQDSA. The disordered stretch occupies residues 325-356; the sequence is LGSSQSNSNNKDYNSQDSAPASKRRRLNTTPI. Residues 346–356 show a composition bias toward basic residues; the sequence is SKRRRLNTTPI.

It belongs to the cyclin family. Cyclin D subfamily.

The sequence is that of Cyclin-D2-2 (CYCD2-2) from Oryza sativa subsp. japonica (Rice).